The following is a 91-amino-acid chain: ATP synthase subunit c (91 aa).

A run of 2 helical transmembrane segments spans residues 4–24 (FTMCVLAAGIGMALGTLGTGI) and 53–73 (IGLAMIESLAIYALVVCLIIL).

It belongs to the ATPase C chain family. F-type ATPases have 2 components, F(1) - the catalytic core - and F(0) - the membrane proton channel. F(1) has five subunits: alpha(3), beta(3), gamma(1), delta(1), epsilon(1). F(0) has three main subunits: a(1), b(2) and c(10-14). The alpha and beta chains form an alternating ring which encloses part of the gamma chain. F(1) is attached to F(0) by a central stalk formed by the gamma and epsilon chains, while a peripheral stalk is formed by the delta and b chains.

It is found in the cell inner membrane. Its function is as follows. F(1)F(0) ATP synthase produces ATP from ADP in the presence of a proton or sodium gradient. F-type ATPases consist of two structural domains, F(1) containing the extramembraneous catalytic core and F(0) containing the membrane proton channel, linked together by a central stalk and a peripheral stalk. During catalysis, ATP synthesis in the catalytic domain of F(1) is coupled via a rotary mechanism of the central stalk subunits to proton translocation. Key component of the F(0) channel; it plays a direct role in translocation across the membrane. A homomeric c-ring of between 10-14 subunits forms the central stalk rotor element with the F(1) delta and epsilon subunits. In Geotalea uraniireducens (strain Rf4) (Geobacter uraniireducens), this protein is ATP synthase subunit c.